The chain runs to 146 residues: Large ribosomal subunit protein uL15 (146 aa).

The tract at residues 1 to 66 (MKLHELKPAP…LQRRMPKRGF (66 aa)) is disordered. 2 stretches are compositionally biased toward gly residues: residues 21–31 (QGIGSGMGKTA) and 42–52 (SGGGVRPGFEG).

It belongs to the universal ribosomal protein uL15 family. Part of the 50S ribosomal subunit.

Its function is as follows. Binds to the 23S rRNA. The polypeptide is Large ribosomal subunit protein uL15 (Pelotomaculum thermopropionicum (strain DSM 13744 / JCM 10971 / SI)).